A 456-amino-acid polypeptide reads, in one-letter code: Crinkler effector protein 2 (456 aa).

The N-terminal stretch at 1-17 (MVKLVCAIVGVAGSAFP) is a signal peptide. Residues 18-54 (VDTDASQLVGDLKKAIKAENAMTFTGDAKDLQLFLAK) form an LQLFLAK domain region. The interval 55-136 (QPVDDESGKE…NMELPSSEQI (82 aa)) is DWL domain. Residues 137–143 (HVLVVVP) carry the HVLVXXP motif motif. The N-linked (GlcNAc...) asparagine glycan is linked to asparagine 338.

This sequence belongs to the Crinkler effector family.

The protein localises to the secreted. It localises to the host nucleus. Its function is as follows. Secreted effector that effector that induces cell death when expressed in host plants. Induces the expression of defense response genes in tomato. The sequence is that of Crinkler effector protein 2 from Phytophthora infestans (Potato late blight agent).